Reading from the N-terminus, the 772-residue chain is Probable serine/threonine-protein kinase HAL5-like (772 aa).

4 disordered regions span residues 1–102, 115–165, 185–241, and 344–396; these read MASS…TRHV, RAGT…EPNN, IDTQ…RSNT, and NADE…SANV. Basic and acidic residues predominate over residues 9–19; the sequence is SEPRISRESSL. Composition is skewed to low complexity over residues 20–33 and 41–59; these read KRSL…KGLF and NTGP…ISTP. The span at 66-86 shows a compositional bias: basic and acidic residues; sequence TKDKQDRLKNLAANKEKELQT. Positions 146-158 are enriched in low complexity; the sequence is RQSSSNRSSSFSN. The segment covering 202–212 has biased composition (basic residues); sequence RRSRSTQRKRL. Positions 454–758 constitute a Protein kinase domain; sequence GKSIGIIGQG…VDSLLKSSWM (305 aa). Residues 460–468 and K498 each bind ATP; that span reads IGQGAYGVV. The active-site Proton acceptor is D609.

Belongs to the protein kinase superfamily. CAMK Ser/Thr protein kinase family. NPR/HAL subfamily. HAL5 sub-subfamily.

It carries out the reaction L-seryl-[protein] + ATP = O-phospho-L-seryl-[protein] + ADP + H(+). The catalysed reaction is L-threonyl-[protein] + ATP = O-phospho-L-threonyl-[protein] + ADP + H(+). This is Probable serine/threonine-protein kinase HAL5-like from Kluyveromyces lactis (strain ATCC 8585 / CBS 2359 / DSM 70799 / NBRC 1267 / NRRL Y-1140 / WM37) (Yeast).